We begin with the raw amino-acid sequence, 493 residues long: Glutamyl-tRNA(Gln) amidotransferase subunit A (493 aa).

Active-site charge relay system residues include lysine 78 and serine 158. Residue serine 182 is the Acyl-ester intermediate of the active site.

Belongs to the amidase family. GatA subfamily. In terms of assembly, heterotrimer of A, B and C subunits.

It catalyses the reaction L-glutamyl-tRNA(Gln) + L-glutamine + ATP + H2O = L-glutaminyl-tRNA(Gln) + L-glutamate + ADP + phosphate + H(+). Allows the formation of correctly charged Gln-tRNA(Gln) through the transamidation of misacylated Glu-tRNA(Gln) in organisms which lack glutaminyl-tRNA synthetase. The reaction takes place in the presence of glutamine and ATP through an activated gamma-phospho-Glu-tRNA(Gln). The polypeptide is Glutamyl-tRNA(Gln) amidotransferase subunit A (Rickettsia africae (strain ESF-5)).